The following is a 132-amino-acid chain: Agouti-signaling protein (132 aa).

Positions Met1–Ser22 are cleaved as a signal peptide. An N-linked (GlcNAc...) asparagine glycan is attached at Asn39. The tract at residues Ile62–Cys93 is disordered. A compositionally biased stretch (basic and acidic residues) spans Ser63 to Met79. Cystine bridges form between Cys93–Cys108, Cys100–Cys114, Cys107–Cys125, Cys111–Cys132, and Cys116–Cys123. In terms of domain architecture, Agouti spans Cys93 to Cys132.

The protein resides in the secreted. In terms of biological role, involved in the regulation of melanogenesis. The binding of ASP to MC1R precludes alpha-MSH initiated signaling and thus blocks production of cAMP, leading to a down-regulation of eumelanogenesis (brown/black pigment) and thus increasing synthesis of pheomelanin (yellow/red pigment). In Trachypithecus auratus (Javan langur), this protein is Agouti-signaling protein (ASIP).